The sequence spans 378 residues: MRFCVFGFLSLFLIVSPASAWFFPNSTAVPPSLRNTTRVFWDAFSNFTGCHHGQNVDGLYRIKKYFQRFGYIPETFSGNFTDDFDDILKAAVELYQTNFNLNVTGELDALTIQHIVIPRCGNPDVVNGTSLMHGGRRKTFEVNFSRTHLHAVKRYTLFPGEPRWPRNRRDLTYAFDPKNPLTEEVKSVFSRAFGRWSDVTALNFTLSESFSTSDITIGFYTGDHGDGEPFDGVLGTLAHAFSPPSGKFHLDADENWVVSGDLDSFLSVTAAVDLESVAVHEIGHLLGLGHSSVEESIMYPTITTGKRKVDLTNDDVEGIQYLYGANPNFNGTTSPPSTTKHQRDTGGFSAAWRIDGSSRSTIVSLLLSTVGLVLWFLP.

Positions 1–20 (MRFCVFGFLSLFLIVSPASA) are cleaved as a signal peptide. A propeptide spans 21–154 (WFFPNSTAVP…SRTHLHAVKR (134 aa)) (activation peptide). N-linked (GlcNAc...) asparagine glycosylation is found at Asn25, Asn35, Asn46, Asn79, and Asn102. Residues 118–125 (PRCGNPDV) carry the Cysteine switch motif. Residue Cys120 participates in Zn(2+) binding. Asn127, Asn143, and Asn203 each carry an N-linked (GlcNAc...) asparagine glycan. His280 lines the Zn(2+) pocket. The active site involves Glu281. Positions 284 and 290 each coordinate Zn(2+). A glycan (N-linked (GlcNAc...) asparagine) is linked at Asn330. A lipid anchor (GPI-anchor amidated serine) is attached at Ser349. Residues 350–378 (AAWRIDGSSRSTIVSLLLSTVGLVLWFLP) constitute a propeptide, removed in mature form.

The protein belongs to the peptidase M10A family. Matrix metalloproteinases (MMPs) subfamily. The cofactor is Zn(2+). Mostly expressed in roots, and, to a lower extent, in flowers, leaves and stems.

Its subcellular location is the cell membrane. With respect to regulation, repressed by acetohydroxamic acid (AHA). Functionally, matrix metalloproteinases (MMPs) or matrixins may play a role in the degradation and remodeling of the extracellular matrix (ECM) during development or in response to stresses. Required for plant growth, morphogenesis, and development with particular relevance for flowering and senescence. Active on McaPLGLDpaAR-NH(2) (QF24) and myelin basic protein (MBP) and, to some extent, on beta-casein. The protein is Metalloendoproteinase 2-MMP of Arabidopsis thaliana (Mouse-ear cress).